The chain runs to 29 residues: Cycloviolacin-H2 (29 aa).

The cyclopeptide (Ser-Asn) cross-link spans 1–29 (SAIACGESCVYIPCFIPGCSCRNRVCYLN). 3 disulfides stabilise this stretch: Cys5–Cys19, Cys9–Cys21, and Cys14–Cys26.

This is a cyclic peptide.

Probably participates in a plant defense mechanism. The protein is Cycloviolacin-H2 of Viola hederacea (Australian violet).